A 241-amino-acid chain; its full sequence is Methylthioribulose-1-phosphate dehydratase (241 aa).

The segment covering 1-17 has biased composition (polar residues); it reads MAKQVENNNNDHLVQST. Residues 1–21 form a disordered region; sequence MAKQVENNNNDHLVQSTDPEH. Position 100 (Cys-100) interacts with substrate. Zn(2+) contacts are provided by His-117 and His-119. The active-site Proton donor/acceptor is Glu-146. Residue His-202 coordinates Zn(2+).

It belongs to the aldolase class II family. MtnB subfamily. Zn(2+) is required as a cofactor.

The protein localises to the cytoplasm. It catalyses the reaction 5-(methylsulfanyl)-D-ribulose 1-phosphate = 5-methylsulfanyl-2,3-dioxopentyl phosphate + H2O. Its pathway is amino-acid biosynthesis; L-methionine biosynthesis via salvage pathway; L-methionine from S-methyl-5-thio-alpha-D-ribose 1-phosphate: step 2/6. Its function is as follows. Catalyzes the dehydration of methylthioribulose-1-phosphate (MTRu-1-P) into 2,3-diketo-5-methylthiopentyl-1-phosphate (DK-MTP-1-P). The protein is Methylthioribulose-1-phosphate dehydratase of Aspergillus flavus (strain ATCC 200026 / FGSC A1120 / IAM 13836 / NRRL 3357 / JCM 12722 / SRRC 167).